The primary structure comprises 210 residues: Na(+)-translocating NADH-quinone reductase subunit D (210 aa).

6 helical membrane-spanning segments follow: residues 14-34 (PIINNNPIALQILGVCSALAV), 42-62 (LVMTIALTAVTAFSNLFISLI), 72-92 (IIVQMTIIASLVIVVDQVLQA), 96-116 (AISKQLSVFVGLIITNCIVMG), 131-151 (FMDGIGNGLGYGAILLSVGVV), and 178-198 (NGLLLLPPSAFFLIGGLIWLI).

The protein belongs to the NqrDE/RnfAE family. As to quaternary structure, composed of six subunits; NqrA, NqrB, NqrC, NqrD, NqrE and NqrF.

The protein localises to the cell inner membrane. The catalysed reaction is a ubiquinone + n Na(+)(in) + NADH + H(+) = a ubiquinol + n Na(+)(out) + NAD(+). Functionally, NQR complex catalyzes the reduction of ubiquinone-1 to ubiquinol by two successive reactions, coupled with the transport of Na(+) ions from the cytoplasm to the periplasm. NqrA to NqrE are probably involved in the second step, the conversion of ubisemiquinone to ubiquinol. The sequence is that of Na(+)-translocating NADH-quinone reductase subunit D from Shewanella frigidimarina (strain NCIMB 400).